Reading from the N-terminus, the 172-residue chain is Ribosome maturation factor RimM (172 aa).

The PRC barrel domain maps to 96 to 168 (DGEFYYHEII…RIDVTVLEGL (73 aa)).

It belongs to the RimM family. Binds ribosomal protein uS19.

Its subcellular location is the cytoplasm. Functionally, an accessory protein needed during the final step in the assembly of 30S ribosomal subunit, possibly for assembly of the head region. Essential for efficient processing of 16S rRNA. May be needed both before and after RbfA during the maturation of 16S rRNA. It has affinity for free ribosomal 30S subunits but not for 70S ribosomes. The protein is Ribosome maturation factor RimM of Streptococcus mutans serotype c (strain ATCC 700610 / UA159).